Reading from the N-terminus, the 131-residue chain is 14.7 kDa heat shock protein (131 aa).

A compositionally biased stretch (polar residues) spans 1–11 (MSRNMEVNAGS). Residues 1–20 (MSRNMEVNAGSSGEIPSPIR) form a disordered region. The region spanning 22–131 (RFQKSGSQAV…INVKERILHY (110 aa)) is the sHSP domain.

The protein belongs to the small heat shock protein (HSP20) family. In terms of assembly, may form oligomeric structures.

The protein localises to the cytoplasm. The polypeptide is 14.7 kDa heat shock protein (HSP14.7) (Arabidopsis thaliana (Mouse-ear cress)).